We begin with the raw amino-acid sequence, 214 residues long: Ubiquitin-conjugating enzyme E2 21 (214 aa).

The UBC core domain occupies 21–168; that stretch reads ARVTRKCKEV…AVYWTSYFAN (148 aa). Cys-106 functions as the Glycyl thioester intermediate in the catalytic mechanism. The region spanning 172-214 is the UBA domain; the sequence is DVEPDFNRKVGRLIEMGIRETEAIVYLSCNNWKLEQALQFIFD.

The protein belongs to the ubiquitin-conjugating enzyme family.

The enzyme catalyses S-ubiquitinyl-[E1 ubiquitin-activating enzyme]-L-cysteine + [E2 ubiquitin-conjugating enzyme]-L-cysteine = [E1 ubiquitin-activating enzyme]-L-cysteine + S-ubiquitinyl-[E2 ubiquitin-conjugating enzyme]-L-cysteine.. The protein operates within protein modification; protein ubiquitination. Functionally, acts with E3 ubiquitin-protein ligase trim-21 to catalyze the 'Lys-48'-linked polyubiquitination of ced-1, promoting its proteasomal degradation to maintain appropriate ced-1 levels for apoptotic cell clearance. In Caenorhabditis elegans, this protein is Ubiquitin-conjugating enzyme E2 21 (ubc-21).